Reading from the N-terminus, the 243-residue chain is MSLAFTLLTSKDNTDEDEEHLELSSFNQEKLLEMISVFLSRLTRLNDSKQEATESDQIPLSPTSLKNPCLIFSAKNVPSISIQAYLTRILKYCPATNDVFLSVLIYLDRIVHHFHFTVFINSFNIHRFLIAGFTAASKFFSDVFYTNSRYAKVGGIPLHELNHLELSFFVFNDFNLFISLEDLQAYGDLLLSWYRQNGQNYNPTDVSCSIESPISHTPQQNQQDEQPRRPIMDRRLLSSHSIG.

Residues 211-224 (ESPISHTPQQNQQD) show a composition bias toward polar residues. The segment at 211–231 (ESPISHTPQQNQQDEQPRRPI) is disordered.

The protein belongs to the cyclin family. PHO80 subfamily. Forms a cyclin-CDK complex with pef1.

The protein localises to the cytoplasm. It is found in the nucleus. In terms of biological role, cyclin partner of the cyclin-dependent kinase (CDK) pef1 (PHO85 homolog). The sequence is that of PHO85 cyclin-like protein psl1 (psl1) from Schizosaccharomyces pombe (strain 972 / ATCC 24843) (Fission yeast).